The primary structure comprises 435 residues: Glutamyl-tRNA reductase (435 aa).

Substrate contacts are provided by residues 49–52 (TCNR), Ser-109, 114–116 (ETQ), and Gln-120. Cys-50 functions as the Nucleophile in the catalytic mechanism. 189–194 (GAGEMS) serves as a coordination point for NADP(+).

Belongs to the glutamyl-tRNA reductase family. In terms of assembly, homodimer.

It carries out the reaction (S)-4-amino-5-oxopentanoate + tRNA(Glu) + NADP(+) = L-glutamyl-tRNA(Glu) + NADPH + H(+). Its pathway is porphyrin-containing compound metabolism; protoporphyrin-IX biosynthesis; 5-aminolevulinate from L-glutamyl-tRNA(Glu): step 1/2. In terms of biological role, catalyzes the NADPH-dependent reduction of glutamyl-tRNA(Glu) to glutamate 1-semialdehyde (GSA). The sequence is that of Glutamyl-tRNA reductase from Listeria monocytogenes serotype 4b (strain CLIP80459).